A 551-amino-acid chain; its full sequence is Tetrachloroethene reductive dehalogenase (551 aa).

Residues 1–39 constitute a signal peptide (tat-type signal); it reads MGEINRRNFLKASMLGAAAAAVASASVVKGVVSPLVADA. A 4Fe-4S ferredoxin-type 1 domain is found at 411 to 440; the sequence is PRKFGVREFCRLCKKCADACPAQAISHEKD. [4Fe-4S] cluster is bound by residues Cys420, Cys423, Cys426, Cys430, Cys467, Cys478, Cys481, and Cys485. Positions 478-496 constitute a 4Fe-4S ferredoxin-type 2 domain; it reads CSNCVAVCSWNKVETWNHD.

This sequence belongs to the PceA family. [4Fe-4S] cluster serves as cofactor. It depends on corrinoid as a cofactor. In terms of processing, predicted to be exported by the Tat system. The position of the signal peptide cleavage has been experimentally proven.

Its subcellular location is the cell membrane. It carries out the reaction trichloroethene + chloride + A + H(+) = tetrachloroethene + AH2. It catalyses the reaction trichloroethene + AH2 = (Z)-1,2-dichloroethene + chloride + A + H(+). Its function is as follows. Catalyzes the reductive dechlorination of tetrachloroethene (PCE) to trichloroethene (TCE) and of trichloroethene to cis-1,2-dichloroethene (DCE). Reduced methyl viologen can act as the artificial electron donor. The polypeptide is Tetrachloroethene reductive dehalogenase (Desulfitobacterium hafniense (Desulfitobacterium frappieri)).